Consider the following 84-residue polypeptide: uncharacterized protein (84 aa).

The next 3 helical transmembrane spans lie at 4 to 20 (AYVL…IKYG), 27 to 49 (VWKA…WIAF), and 59 to 81 (IGLA…VYVL).

It is found in the cell membrane. This is an uncharacterized protein from Archaeoglobus fulgidus (strain ATCC 49558 / DSM 4304 / JCM 9628 / NBRC 100126 / VC-16).